The following is a 434-amino-acid chain: Trigger factor (434 aa).

The PPIase FKBP-type domain maps to G160–P245.

This sequence belongs to the FKBP-type PPIase family. Tig subfamily.

Its subcellular location is the cytoplasm. The enzyme catalyses [protein]-peptidylproline (omega=180) = [protein]-peptidylproline (omega=0). Functionally, involved in protein export. Acts as a chaperone by maintaining the newly synthesized protein in an open conformation. Functions as a peptidyl-prolyl cis-trans isomerase. This chain is Trigger factor, found in Shewanella sp. (strain ANA-3).